A 430-amino-acid polypeptide reads, in one-letter code: Aspartate aminotransferase, mitochondrial (430 aa).

The N-terminal 29 residues, 1–29 (MALLHSGRVLSGMAAAFHPGLAAAASARA), are a transit peptide targeting the mitochondrion. Thr-48 is subject to Phosphothreonine. Lys-59 carries the N6-acetyllysine modification. Gly-65 is a substrate binding site. At Lys-73 the chain carries N6-acetyllysine; alternate. An N6-succinyllysine; alternate modification is found at Lys-73. Position 82 is an N6-acetyllysine (Lys-82). An N6-acetyllysine; alternate modification is found at Lys-90. Lys-90 is subject to N6-succinyllysine; alternate. Tyr-96 bears the 3'-nitrotyrosine; alternate mark. Tyr-96 bears the Phosphotyrosine; alternate mark. An N6-acetyllysine; alternate mark is found at Lys-107 and Lys-122. An N6-succinyllysine; alternate mark is found at Lys-107 and Lys-122. At Ser-143 the chain carries Phosphoserine. N6-acetyllysine; alternate is present on Lys-159. An N6-succinyllysine; alternate modification is found at Lys-159. A substrate-binding site is contributed by Trp-162. N6-acetyllysine; alternate is present on Lys-185. Position 185 is an N6-succinyllysine; alternate (Lys-185). A substrate-binding site is contributed by Asn-215. Lys-227 carries the N6-succinyllysine modification. Lys-234 carries the N6-acetyllysine modification. 2 positions are modified to N6-acetyllysine; alternate: Lys-279 and Lys-296. The residue at position 279 (Lys-279) is an N6-(pyridoxal phosphate)lysine; alternate. At Lys-296 the chain carries N6-succinyllysine; alternate. The residue at position 302 (Lys-302) is an N6-acetyllysine. Position 309 is an N6-acetyllysine; alternate (Lys-309). Lys-309 is modified (N6-succinyllysine; alternate). Arg-313 carries the asymmetric dimethylarginine modification. Lys-338 carries the post-translational modification N6-acetyllysine; alternate. N6-succinyllysine; alternate is present on Lys-338. Lys-345 is subject to N6-acetyllysine. An N6-acetyllysine; alternate modification is found at Lys-363. Lys-363 is subject to N6-succinyllysine; alternate. N6-acetyllysine is present on residues Lys-364 and Lys-387. Lys-396 and Lys-404 each carry N6-acetyllysine; alternate. An N6-succinyllysine; alternate mark is found at Lys-396 and Lys-404. Arg-407 is a substrate binding site.

It belongs to the class-I pyridoxal-phosphate-dependent aminotransferase family. As to quaternary structure, homodimer. Pyridoxal 5'-phosphate is required as a cofactor. Expressed in all tissues tested: liver, pancreas, kidney, heart, spleen, arterioles, and lymphocytes.

It is found in the mitochondrion matrix. It localises to the cell membrane. It carries out the reaction L-aspartate + 2-oxoglutarate = oxaloacetate + L-glutamate. The catalysed reaction is L-kynurenine + 2-oxoglutarate = kynurenate + L-glutamate + H2O. Its function is as follows. Catalyzes the irreversible transamination of the L-tryptophan metabolite L-kynurenine to form kynurenic acid (KA). As a member of the malate-aspartate shuttle, it has a key role in the intracellular NAD(H) redox balance. Is important for metabolite exchange between mitochondria and cytosol, and for amino acid metabolism. Facilitates cellular uptake of long-chain free fatty acids. This chain is Aspartate aminotransferase, mitochondrial (Got2), found in Rattus norvegicus (Rat).